Here is an 81-residue protein sequence, read N- to C-terminus: Photosystem I iron-sulfur center (81 aa).

2 4Fe-4S ferredoxin-type domains span residues 2 to 31 (SHSV…MIPW) and 39 to 68 (IASA…VRVY). Positions 11, 14, 17, 21, 48, 51, 54, and 58 each coordinate [4Fe-4S] cluster.

In terms of assembly, the eukaryotic PSI reaction center is composed of at least 11 subunits. The cofactor is [4Fe-4S] cluster.

The protein resides in the plastid. Its subcellular location is the chloroplast thylakoid membrane. The enzyme catalyses reduced [plastocyanin] + hnu + oxidized [2Fe-2S]-[ferredoxin] = oxidized [plastocyanin] + reduced [2Fe-2S]-[ferredoxin]. In terms of biological role, apoprotein for the two 4Fe-4S centers FA and FB of photosystem I (PSI); essential for photochemical activity. FB is the terminal electron acceptor of PSI, donating electrons to ferredoxin. The C-terminus interacts with PsaA/B/D and helps assemble the protein into the PSI complex. Required for binding of PsaD and PsaE to PSI. PSI is a plastocyanin-ferredoxin oxidoreductase, converting photonic excitation into a charge separation, which transfers an electron from the donor P700 chlorophyll pair to the spectroscopically characterized acceptors A0, A1, FX, FA and FB in turn. In Zea mays (Maize), this protein is Photosystem I iron-sulfur center.